Here is a 133-residue protein sequence, read N- to C-terminus: uncharacterized protein (133 aa).

The chain crosses the membrane as a helical span at residues 36–56 (LPMLIALACIFLLLATCLLFM). The tract at residues 105–133 (HGRPTVPRQPLPGPEDNRSHCDYMESTKM) is disordered. The span at 119-133 (EDNRSHCDYMESTKM) shows a compositional bias: basic and acidic residues.

The protein localises to the membrane. This is an uncharacterized protein from Homo sapiens (Human).